The following is a 474-amino-acid chain: Ribulose bisphosphate carboxylase large chain (474 aa).

Residues N117 and T167 each coordinate substrate. K169 functions as the Proton acceptor in the catalytic mechanism. Substrate is bound at residue K171. Mg(2+) contacts are provided by K195, D197, and E198. K195 carries the N6-carboxylysine modification. H288 functions as the Proton acceptor in the catalytic mechanism. Substrate contacts are provided by R289, H321, and S373.

The protein belongs to the RuBisCO large chain family. Type I subfamily. In terms of assembly, heterohexadecamer of 8 large chains and 8 small chains. It depends on Mg(2+) as a cofactor.

It carries out the reaction 2 (2R)-3-phosphoglycerate + 2 H(+) = D-ribulose 1,5-bisphosphate + CO2 + H2O. The catalysed reaction is D-ribulose 1,5-bisphosphate + O2 = 2-phosphoglycolate + (2R)-3-phosphoglycerate + 2 H(+). RuBisCO catalyzes two reactions: the carboxylation of D-ribulose 1,5-bisphosphate, the primary event in carbon dioxide fixation, as well as the oxidative fragmentation of the pentose substrate. Both reactions occur simultaneously and in competition at the same active site. The polypeptide is Ribulose bisphosphate carboxylase large chain (Hydrogenophilus thermoluteolus (Pseudomonas hydrogenothermophila)).